The chain runs to 389 residues: S-adenosylmethionine synthase (389 aa).

ATP is bound at residue His15. Asp17 provides a ligand contact to Mg(2+). K(+) is bound at residue Glu43. L-methionine contacts are provided by Glu56 and Gln99. Positions 99-109 are flexible loop; that stretch reads QSPDIAQGVNE. ATP is bound by residues 166-168, 234-235, Asp243, 249-250, Ala266, and Lys270; these read DAK, RF, and RK. An L-methionine-binding site is contributed by Asp243. Lys274 is an L-methionine binding site.

The protein belongs to the AdoMet synthase family. As to quaternary structure, homotetramer; dimer of dimers. Requires Mg(2+) as cofactor. It depends on K(+) as a cofactor.

Its subcellular location is the cytoplasm. The enzyme catalyses L-methionine + ATP + H2O = S-adenosyl-L-methionine + phosphate + diphosphate. Its pathway is amino-acid biosynthesis; S-adenosyl-L-methionine biosynthesis; S-adenosyl-L-methionine from L-methionine: step 1/1. In terms of biological role, catalyzes the formation of S-adenosylmethionine (AdoMet) from methionine and ATP. The overall synthetic reaction is composed of two sequential steps, AdoMet formation and the subsequent tripolyphosphate hydrolysis which occurs prior to release of AdoMet from the enzyme. This Neisseria meningitidis serogroup C / serotype 2a (strain ATCC 700532 / DSM 15464 / FAM18) protein is S-adenosylmethionine synthase.